Here is a 338-residue protein sequence, read N- to C-terminus: Putative acyl-[acyl-carrier-protein] desaturase DesA1 (338 aa).

The Fe cation site is built by Glu76, Glu107, His110, Glu167, Glu197, and His200. The segment covering 314-328 (EARTGKKVSAHELHK) has biased composition (basic and acidic residues). Residues 314 to 338 (EARTGKKVSAHELHKTAGKLAMSRR) form a disordered region.

This sequence belongs to the fatty acid desaturase type 2 family. As to quaternary structure, homodimer. Fe(2+) is required as a cofactor.

Its subcellular location is the cell surface. It participates in lipid metabolism; fatty acid metabolism. In terms of biological role, may be a desaturase involved in mycobacterial fatty acid biosynthesis. In Mycobacterium tuberculosis (strain CDC 1551 / Oshkosh), this protein is Putative acyl-[acyl-carrier-protein] desaturase DesA1 (desA1).